Here is a 192-residue protein sequence, read N- to C-terminus: MFNITDKAKVYMADLFAQQDEKDLGLKVDIEKAGTPAATVIFNFCFPKELSKTYQKFEYKGFDVYINKLNFVYLKDSEVALKDSSVGKKLIITAPNAKGEEPKEDAPLEEKIKYVIAADITPGLASHGGFVELVGITKQIDVILNFGGGCQGCSSVKSTLEQGVEAQLKARFPEIKSVRDVTNHANTDNAYM.

Residues Cys150 and Cys153 each contribute to the [4Fe-4S] cluster site.

The protein belongs to the NfuA family. Homodimer. The cofactor is [4Fe-4S] cluster.

Its function is as follows. Involved in iron-sulfur cluster biogenesis. Binds a 4Fe-4S cluster, can transfer this cluster to apoproteins, and thereby intervenes in the maturation of Fe/S proteins. Could also act as a scaffold/chaperone for damaged Fe/S proteins. The protein is Fe/S biogenesis protein NfuA of Vesicomyosocius okutanii subsp. Calyptogena okutanii (strain HA).